The chain runs to 62 residues: Toxin Tst2 (62 aa).

Residues 1 to 62 (KEGYAMDHEG…KVWDYATNKC (62 aa)) form the LCN-type CS-alpha/beta domain. Intrachain disulfides connect Cys11–Cys62, Cys15–Cys38, Cys23–Cys43, and Cys27–Cys45. Position 62 is a cysteine amide (Cys62).

Expressed by the venom gland.

It localises to the secreted. In terms of biological role, alpha toxins bind voltage-independently at site-3 of sodium channels (Nav) and inhibit the inactivation of the activated channels, thereby blocking neuronal transmission. Is toxic to mice. The polypeptide is Toxin Tst2 (Tityus stigmurus (Brazilian scorpion)).